The following is a 273-amino-acid chain: Shikimate dehydrogenase (NADP(+)) (273 aa).

Shikimate contacts are provided by residues 14–16 and Thr61; that span reads SKS. Residue Lys65 is the Proton acceptor of the active site. Residue Asp77 participates in NADP(+) binding. Residues Asn86 and Asp102 each contribute to the shikimate site. Residues 126 to 130, 150 to 155, and Met213 contribute to the NADP(+) site; these read GAGGA and NRTYEK. Tyr215 contributes to the shikimate binding site. Gly237 serves as a coordination point for NADP(+).

The protein belongs to the shikimate dehydrogenase family. As to quaternary structure, homodimer.

The catalysed reaction is shikimate + NADP(+) = 3-dehydroshikimate + NADPH + H(+). It functions in the pathway metabolic intermediate biosynthesis; chorismate biosynthesis; chorismate from D-erythrose 4-phosphate and phosphoenolpyruvate: step 4/7. In terms of biological role, involved in the biosynthesis of the chorismate, which leads to the biosynthesis of aromatic amino acids. Catalyzes the reversible NADPH linked reduction of 3-dehydroshikimate (DHSA) to yield shikimate (SA). The chain is Shikimate dehydrogenase (NADP(+)) from Aliivibrio salmonicida (strain LFI1238) (Vibrio salmonicida (strain LFI1238)).